Consider the following 198-residue polypeptide: MKQPQIPVKMLTTLTILMVFLCIGSYLLSPKWQAVRAEYQRQRDPLHQFASQQNPEAQLQALQDKIRANPQNSEQWALLGEYYLWQNDYSNSLLAYRQALQLRGENAELYAALATVLYYQASQHMTAQTRAMIDKALALDSNEITALMLLASDAFMQANYAQAIELWQKVMDLNSPRINRTQLVESINMAKLLQRRSD.

TPR repeat units follow at residues 73-106 (SEQW…RGEN) and 144-177 (ITAL…NSPR).

Its function is as follows. Required for formate-dependent nitrite reduction. Not required for the biosynthesis of any of the c-type cytochromes nor for the secretion of the periplasmic cytochromes. This Escherichia coli O157:H7 protein is Formate-dependent nitrite reductase complex subunit NrfG (nrfG).